The chain runs to 403 residues: Argininosuccinate synthase (403 aa).

Residues 10 to 18 (AYSGGVDTS) and alanine 38 contribute to the ATP site. Tyrosine 89 contacts L-citrulline. Glycine 119 contacts ATP. Threonine 121, asparagine 125, and aspartate 126 together coordinate L-aspartate. Asparagine 125 is an L-citrulline binding site. Residues arginine 129, serine 177, serine 186, glutamate 262, and tyrosine 274 each coordinate L-citrulline.

The protein belongs to the argininosuccinate synthase family. Type 1 subfamily. Homotetramer.

Its subcellular location is the cytoplasm. The catalysed reaction is L-citrulline + L-aspartate + ATP = 2-(N(omega)-L-arginino)succinate + AMP + diphosphate + H(+). It participates in amino-acid biosynthesis; L-arginine biosynthesis; L-arginine from L-ornithine and carbamoyl phosphate: step 2/3. This is Argininosuccinate synthase from Synechococcus sp. (strain CC9605).